The following is a 325-amino-acid chain: Glutarate 2-hydroxylase (325 aa).

The Fe cation site is built by His-160, Asp-162, and His-292.

It belongs to the glutarate hydroxylase family. Homotetramer. Requires Fe(2+) as cofactor.

The catalysed reaction is glutarate + 2-oxoglutarate + O2 = (S)-2-hydroxyglutarate + succinate + CO2. Its pathway is amino-acid degradation. Acts as an alpha-ketoglutarate-dependent dioxygenase catalyzing hydroxylation of glutarate (GA) to L-2-hydroxyglutarate (L2HG). Functions in a L-lysine degradation pathway that proceeds via cadaverine, glutarate and L-2-hydroxyglutarate. In Escherichia fergusonii (strain ATCC 35469 / DSM 13698 / CCUG 18766 / IAM 14443 / JCM 21226 / LMG 7866 / NBRC 102419 / NCTC 12128 / CDC 0568-73), this protein is Glutarate 2-hydroxylase.